The primary structure comprises 324 residues: Cuticle collagen sqt-1 (324 aa).

2 disordered regions span residues 68–108 (RRQY…TPNG) and 129–324 (SGPK…YRNI). Residues 87–97 (SAPPGQPPAVP) are compositionally biased toward pro residues. 3 triple-helical region regions span residues 127–153 (GPSG…PGVG), 171–231 (QGPV…KGRD), and 237–299 (GRPG…PGKD). Low complexity-rich tracts occupy residues 129–156 (SGPK…GADD) and 177–201 (PGAL…PGRD). A compositionally biased stretch (basic and acidic residues) spans 227–236 (EKGRDAEHPI).

It belongs to the cuticular collagen family. In terms of assembly, collagen polypeptide chains are complexed within the cuticle by disulfide bonds and other types of covalent cross-links.

In terms of biological role, nematode cuticles are composed largely of collagen-like proteins. The cuticle functions both as an exoskeleton and as a barrier to protect the worm from its environment. This is a collagen critical for organismal morphogenesis. Mutations in sqt-1 can lengthen, shorten, or helically twist the entire animal. The polypeptide is Cuticle collagen sqt-1 (sqt-1) (Caenorhabditis elegans).